The chain runs to 303 residues: Aspartate carbamoyltransferase catalytic subunit (303 aa).

Residues Arg49 and Thr50 each contribute to the carbamoyl phosphate site. Lys77 lines the L-aspartate pocket. Arg99, His126, and Gln129 together coordinate carbamoyl phosphate. Residues Arg159 and Arg211 each contribute to the L-aspartate site. Carbamoyl phosphate-binding residues include Ser252 and Pro253.

It belongs to the aspartate/ornithine carbamoyltransferase superfamily. ATCase family. In terms of assembly, heterododecamer (2C3:3R2) of six catalytic PyrB chains organized as two trimers (C3), and six regulatory PyrI chains organized as three dimers (R2).

It carries out the reaction carbamoyl phosphate + L-aspartate = N-carbamoyl-L-aspartate + phosphate + H(+). Its pathway is pyrimidine metabolism; UMP biosynthesis via de novo pathway; (S)-dihydroorotate from bicarbonate: step 2/3. Its function is as follows. Catalyzes the condensation of carbamoyl phosphate and aspartate to form carbamoyl aspartate and inorganic phosphate, the committed step in the de novo pyrimidine nucleotide biosynthesis pathway. This chain is Aspartate carbamoyltransferase catalytic subunit, found in Listeria welshimeri serovar 6b (strain ATCC 35897 / DSM 20650 / CCUG 15529 / CIP 8149 / NCTC 11857 / SLCC 5334 / V8).